Consider the following 501-residue polypeptide: Putative lon protease homolog (501 aa).

53-60 (GPPGIGKS) contributes to the ATP binding site. Positions 481–494 (SSSQRMSQHGYSSE) are enriched in polar residues. The interval 481 to 501 (SSSQRMSQHGYSSENIDRSYM) is disordered.

Belongs to the peptidase S16 family.

The sequence is that of Putative lon protease homolog from Methanothermobacter thermautotrophicus (strain ATCC 29096 / DSM 1053 / JCM 10044 / NBRC 100330 / Delta H) (Methanobacterium thermoautotrophicum).